We begin with the raw amino-acid sequence, 328 residues long: Tetraacyldisaccharide 4'-kinase (328 aa).

An ATP-binding site is contributed by 55-62 (TAGGNGKT).

Belongs to the LpxK family.

The enzyme catalyses lipid A disaccharide (E. coli) + ATP = lipid IVA (E. coli) + ADP + H(+). The protein operates within glycolipid biosynthesis; lipid IV(A) biosynthesis; lipid IV(A) from (3R)-3-hydroxytetradecanoyl-[acyl-carrier-protein] and UDP-N-acetyl-alpha-D-glucosamine: step 6/6. Its function is as follows. Transfers the gamma-phosphate of ATP to the 4'-position of a tetraacyldisaccharide 1-phosphate intermediate (termed DS-1-P) to form tetraacyldisaccharide 1,4'-bis-phosphate (lipid IVA). The chain is Tetraacyldisaccharide 4'-kinase (lpxK) from Escherichia coli (strain K12).